The chain runs to 211 residues: Uracil phosphoribosyltransferase (211 aa).

5-phospho-alpha-D-ribose 1-diphosphate contacts are provided by residues arginine 79, arginine 104, and 131–139 (DPMLATGGS). Uracil is bound by residues isoleucine 196 and 201–203 (GDA). Aspartate 202 is a 5-phospho-alpha-D-ribose 1-diphosphate binding site.

This sequence belongs to the UPRTase family. Mg(2+) serves as cofactor.

The catalysed reaction is UMP + diphosphate = 5-phospho-alpha-D-ribose 1-diphosphate + uracil. It functions in the pathway pyrimidine metabolism; UMP biosynthesis via salvage pathway; UMP from uracil: step 1/1. Allosterically activated by GTP. Its function is as follows. Catalyzes the conversion of uracil and 5-phospho-alpha-D-ribose 1-diphosphate (PRPP) to UMP and diphosphate. In Limosilactobacillus fermentum (strain NBRC 3956 / LMG 18251) (Lactobacillus fermentum), this protein is Uracil phosphoribosyltransferase.